Consider the following 151-residue polypeptide: Thymosin beta (151 aa).

Tandem repeats lie at residues 24–29, 62–67, 100–105, and 134–139. The 4 X 6 AA repeat of L-[KH]-[KSH]-[VT]-[EP]-[TV] stretch occupies residues 24–139; sequence LKKVETTEKN…DKSALHHVET (116 aa).

Belongs to the thymosin beta family. Interacts (via repeats 1, 2 and 4) with G-actin in a 1:3 ratio. Interacts (via repeats 2 and 3) with F-actin. In terms of tissue distribution, at the comma stage, enriched in the developing nerve ring (at protein level). Ubiquitously expressed in larvae and adults with enrichment in the spermatheca, the intestinal tract and the posterior bulb of the pharynx (at protein level). Expressed in oocytes and in the gonad (at protein level).

The protein resides in the cytoplasm. It is found in the cell cortex. It localises to the cell junction. The protein localises to the cytoskeleton. Plays an important role in the organization of the cytoskeleton by regulating actin polymerization in two ways. Firstly, by binding to and sequestering actin monomers (G actin) inhibits actin polymerization. Secondly, by binding directly filamentous actin (F actin) promotes actin polymerization. Regulates the formation of cortical actin in oocytes conferring them enough rigidity to sustain the contractions during ovulation. The chain is Thymosin beta from Caenorhabditis elegans.